The chain runs to 420 residues: ATP phosphoribosyltransferase regulatory subunit (420 aa).

This sequence belongs to the class-II aminoacyl-tRNA synthetase family. HisZ subfamily. As to quaternary structure, heteromultimer composed of HisG and HisZ subunits.

It is found in the cytoplasm. The protein operates within amino-acid biosynthesis; L-histidine biosynthesis; L-histidine from 5-phospho-alpha-D-ribose 1-diphosphate: step 1/9. In terms of biological role, required for the first step of histidine biosynthesis. May allow the feedback regulation of ATP phosphoribosyltransferase activity by histidine. This Bacillus cereus (strain ATCC 10987 / NRS 248) protein is ATP phosphoribosyltransferase regulatory subunit.